The chain runs to 753 residues: ATPase family gene 2 protein homolog B (753 aa).

Methionine 1 is subject to N-acetylmethionine. Residues 1–189 are required for interaction with AFG2A and CINP; it reads MAPDSDPFPE…PRTRVSLGGE (189 aa). The segment at 171-203 is disordered; it reads SPDPAGLVTPRTRVSLGGEPPSEAQPQPEVPLG. ATP is bound by residues 241–248 and 505–512; these read GPPGVGKT and GPPGCAKT.

It belongs to the AAA ATPase family. AFG2 subfamily. In terms of assembly, part of the 55LCC heterohexameric ATPase complex composed at least of AIRIM, AFG2A, AFG2B and CINP. Associates with pre-60S ribosomal particles. In terms of tissue distribution, expressed in both neurons and glia during embryonic and adult stages of brain development.

It is found in the cytoplasm. The protein localises to the cytoskeleton. It localises to the spindle. Its subcellular location is the nucleus. The enzyme catalyses ATP + H2O = ADP + phosphate + H(+). In the context of 55LCC heterohexameric ATPase complex, the ATPase activity is stimulated by DNA binding and inhibited in presence of RNA. ATP-dependent chaperone part of the 55LCC heterohexameric ATPase complex which is chromatin-associated and promotes replisome proteostasis to maintain replication fork progression and genome stability. Required for replication fork progression, sister chromatid cohesion, and chromosome stability. The ATPase activity is specifically enhanced by replication fork DNA and is coupled to cysteine protease-dependent cleavage of replisome substrates in response to replication fork damage. Uses ATPase activity to process replisome substrates in S-phase, facilitating their proteolytic turnover from chromatin to ensure DNA replication and mitotic fidelity. Plays an essential role in the cytoplasmic maturation steps of pre-60S ribosomal particles by promoting the release of shuttling protein RSL24D1/RLP24 from the pre-ribosomal particles. The chain is ATPase family gene 2 protein homolog B from Homo sapiens (Human).